The following is a 129-amino-acid chain: Small ribosomal subunit protein uS11 (129 aa).

It belongs to the universal ribosomal protein uS11 family. Part of the 30S ribosomal subunit. Interacts with proteins S7 and S18. Binds to IF-3.

Functionally, located on the platform of the 30S subunit, it bridges several disparate RNA helices of the 16S rRNA. Forms part of the Shine-Dalgarno cleft in the 70S ribosome. The sequence is that of Small ribosomal subunit protein uS11 from Roseobacter denitrificans (strain ATCC 33942 / OCh 114) (Erythrobacter sp. (strain OCh 114)).